Reading from the N-terminus, the 252-residue chain is Tricin synthase 1 (252 aa).

Residues Ser65, Glu87, 89 to 90, Ser95, and Asp113 contribute to the S-adenosyl-L-methionine site; that span reads GV. Asp168 lines the a divalent metal cation pocket. Residue Asp170 participates in S-adenosyl-L-methionine binding. 2 residues coordinate a divalent metal cation: Asp194 and Asn195.

This sequence belongs to the class I-like SAM-binding methyltransferase superfamily. Cation-dependent O-methyltransferase family. CCoAMT subfamily. It depends on Mg(2+) as a cofactor. Mn(2+) is required as a cofactor. Requires Co(2+) as cofactor. Ubiquitous. Highest expression in stems and roots.

The protein resides in the nucleus. The catalysed reaction is tricetin + 2 S-adenosyl-L-methionine = 3',5'-di-O-methyltricetin + 2 S-adenosyl-L-homocysteine + 2 H(+). Its function is as follows. Catalyzes the stepwise methylation of tricetin to its 3'-mono- and 3',5'-dimethyl ethers. No 3',4',5'-trimethylated ester derivatives are produced. Can use caffeoyl-CoA, 5-hydroxyferulic acid, luteolin, tricetin, quercetin, myrcetin and 7,8-dihydroxyflavone as substrates, but not naringenin, apigenin or kaempferol. The 2,3-double bond and the O-dihydroxyl group of the substrate are both required for catalytic activity of the enzyme. In Oryza sativa subsp. japonica (Rice), this protein is Tricin synthase 1 (ROMT-15).